The following is a 275-amino-acid chain: Intercellular adhesion molecule 2 (275 aa).

The first 24 residues, 1-24, serve as a signal peptide directing secretion; the sequence is MSSFGYRTLTVALFALICCPGSDE. Residues 25–223 lie on the Extracellular side of the membrane; sequence KVFEVHVRPK…EIYEPVSDSQ (199 aa). One can recognise an Ig-like C2-type 1 domain in the interval 41–98; that stretch reads KASLEVNCSTTCNQPEVGGLETSLDKILLDEQAQWKHYLVSNISHDTVLQCHFTCSGK. Asparagine 47, asparagine 82, asparagine 105, asparagine 153, asparagine 158, asparagine 176, and asparagine 187 each carry an N-linked (GlcNAc...) asparagine glycan. Cystine bridges form between cysteine 48/cysteine 91 and cysteine 52/cysteine 95. Residues 127–197 form the Ig-like C2-type 2 domain; it reads GKSFTIECRV…FSCLAVLDLI (71 aa). A disulfide bond links cysteine 134 and cysteine 190. Residues 224–248 traverse the membrane as a helical segment; sequence MVIIVTVVSVLLSLFVTSVLLCFIF. Residues 249 to 275 lie on the Cytoplasmic side of the membrane; that stretch reads GQHLRQQRMGTYGVRAAWRRLPQAFRP. The required for interaction with EZR, MSN and RDX and co-localization to microvilli stretch occupies residues 251-275; that stretch reads HLRQQRMGTYGVRAAWRRLPQAFRP.

Belongs to the immunoglobulin superfamily. ICAM family. In terms of assembly, interacts with RDX, EZR and MSN.

The protein resides in the membrane. It localises to the cell projection. Its subcellular location is the microvillus. Functionally, ICAM proteins are ligands for the leukocyte adhesion protein LFA-1 (integrin alpha-L/beta-2). ICAM2 may play a role in lymphocyte recirculation by blocking LFA-1-dependent cell adhesion. It mediates adhesive interactions important for antigen-specific immune response, NK-cell mediated clearance, lymphocyte recirculation, and other cellular interactions important for immune response and surveillance. In Gorilla gorilla gorilla (Western lowland gorilla), this protein is Intercellular adhesion molecule 2 (ICAM2).